The chain runs to 595 residues: Aspartate--tRNA ligase (595 aa).

Position 171 (glutamate 171) interacts with L-aspartate. The aspartate stretch occupies residues 195–198; it reads QLFK. Arginine 217 is a binding site for L-aspartate. ATP contacts are provided by residues 217–219 and glutamine 226; that span reads RDE. Histidine 448 lines the L-aspartate pocket. Position 482 (glutamate 482) interacts with ATP. Residue arginine 489 participates in L-aspartate binding. Residue 534–537 participates in ATP binding; sequence GLDR.

The protein belongs to the class-II aminoacyl-tRNA synthetase family. Type 1 subfamily. In terms of assembly, homodimer.

It localises to the cytoplasm. It carries out the reaction tRNA(Asp) + L-aspartate + ATP = L-aspartyl-tRNA(Asp) + AMP + diphosphate. Catalyzes the attachment of L-aspartate to tRNA(Asp) in a two-step reaction: L-aspartate is first activated by ATP to form Asp-AMP and then transferred to the acceptor end of tRNA(Asp). In Erwinia tasmaniensis (strain DSM 17950 / CFBP 7177 / CIP 109463 / NCPPB 4357 / Et1/99), this protein is Aspartate--tRNA ligase.